The chain runs to 458 residues: UPF0210 protein MmarC5_0151 (458 aa).

This sequence belongs to the UPF0210 family.

The chain is UPF0210 protein MmarC5_0151 from Methanococcus maripaludis (strain C5 / ATCC BAA-1333).